The primary structure comprises 501 residues: DEAD-box ATP-dependent RNA helicase 20 (501 aa).

Composition is skewed to basic and acidic residues over residues 1–20 and 38–53; these read MSRY…RRSD and SKKD…KLDL. Residues 1–53 are disordered; it reads MSRYDSRTGDSTSYRDRRSDSGFGGTSSYGSSGSHTSSKKDNDGNESPRKLDL. The Q motif signature appears at 99–127; sequence KSFRDVGFPDYVLEEVKKAGFTEPTPIQS. Residues 130 to 305 form the Helicase ATP-binding domain; it reads WPMAMKGRDL…KKFLYNPYKV (176 aa). 143–150 serves as a coordination point for ATP; that stretch reads AETGSGKT. Positions 253–256 match the DEAD box motif; that stretch reads DEAD. In terms of domain architecture, Helicase C-terminal spans 333–478; the sequence is KLVKLLEDIM…KVSPELASMG (146 aa). A disordered region spans residues 473–501; the sequence is ELASMGRSTAPPPPGLGGFRDRGSRRGWS. The segment covering 491–501 has biased composition (basic and acidic residues); it reads FRDRGSRRGWS.

It belongs to the DEAD box helicase family. DDX5/DBP2 subfamily.

The protein localises to the nucleus. It carries out the reaction ATP + H2O = ADP + phosphate + H(+). In terms of biological role, ATP-dependent RNA helicase involved nonsense-mediated mRNA decay and ribosome biogenesis through rRNA processing. This Arabidopsis thaliana (Mouse-ear cress) protein is DEAD-box ATP-dependent RNA helicase 20 (RH20).